A 568-amino-acid chain; its full sequence is Glycine--tRNA ligase (568 aa).

The substrate site is built by Arg97 and Glu163. ATP is bound by residues 195 to 197, 205 to 210, 322 to 323, and 441 to 444; these read RNE, IRLREF, EC, and GIDR. A substrate-binding site is contributed by 210–214; the sequence is FTQAE. 437–441 is a binding site for substrate; sequence EPSFG.

Belongs to the class-II aminoacyl-tRNA synthetase family.

It localises to the cytoplasm. It carries out the reaction tRNA(Gly) + glycine + ATP = glycyl-tRNA(Gly) + AMP + diphosphate. In terms of biological role, catalyzes the attachment of glycine to tRNA(Gly). The polypeptide is Glycine--tRNA ligase (Pyrococcus furiosus (strain ATCC 43587 / DSM 3638 / JCM 8422 / Vc1)).